The primary structure comprises 194 residues: Mitochondrial import inner membrane translocase subunit Tim22 (194 aa).

Cystine bridges form between Cys-69–Cys-141 and Cys-160–Cys-179. A run of 3 helical transmembrane segments spans residues 74–94 (ALAC…TAGI), 123–143 (MSYA…ECLI), and 170–190 (AGLK…AAID).

It belongs to the Tim17/Tim22/Tim23 family. As to quaternary structure, component of the TIM22 complex, whose core is composed of TIMM22, associated with peripheral protein FXC1/TIMM10B and the 70 kDa heterohexamer. In most cases, the 70 kDa complex is composed of TIMM9 and TIMM10 (TIMM10A or TIMM10B). A small fraction of the 70 kDa complex is composed of TIMM8 (TIMM8A/DDP1 or TIMM8B/DDP2) and TIMM13. The TIM22 complex also contains AGK and TIMM29. Interacts directly with TIMM9, TIMM10A and FXC1/TIMM10B. Interacts (when oxidized) with TIMM29; interaction is direct. In terms of processing, disulfide bonds promote efficient assembly of the TIM22 complex.

The protein resides in the mitochondrion inner membrane. In terms of biological role, essential core component of the TIM22 complex, a complex that mediates the import and insertion of multi-pass transmembrane proteins into the mitochondrial inner membrane. In the TIM22 complex, it constitutes the voltage-activated and signal-gated channel. Forms a twin-pore translocase that uses the membrane potential as external driving force in 2 voltage-dependent steps. The polypeptide is Mitochondrial import inner membrane translocase subunit Tim22 (TIMM22) (Homo sapiens (Human)).